The sequence spans 439 residues: tRNA-2-methylthio-N(6)-dimethylallyladenosine synthase (439 aa).

An MTTase N-terminal domain is found at 2–115 (KGLYIKTYGC…LPELIVKASR (114 aa)). The [4Fe-4S] cluster site is built by Cys11, Cys47, Cys78, Cys155, Cys159, and Cys162. In terms of domain architecture, Radical SAM core spans 141 to 372 (NSQGSSAFLA…QKLISKQQLE (232 aa)). The region spanning 375 to 439 (QSMVGKTIPV…QSSLLGCAFH (65 aa)) is the TRAM domain.

Belongs to the methylthiotransferase family. MiaB subfamily. In terms of assembly, monomer. Requires [4Fe-4S] cluster as cofactor.

The protein localises to the cytoplasm. It catalyses the reaction N(6)-dimethylallyladenosine(37) in tRNA + (sulfur carrier)-SH + AH2 + 2 S-adenosyl-L-methionine = 2-methylsulfanyl-N(6)-dimethylallyladenosine(37) in tRNA + (sulfur carrier)-H + 5'-deoxyadenosine + L-methionine + A + S-adenosyl-L-homocysteine + 2 H(+). Its function is as follows. Catalyzes the methylthiolation of N6-(dimethylallyl)adenosine (i(6)A), leading to the formation of 2-methylthio-N6-(dimethylallyl)adenosine (ms(2)i(6)A) at position 37 in tRNAs that read codons beginning with uridine. The sequence is that of tRNA-2-methylthio-N(6)-dimethylallyladenosine synthase from Wolbachia pipientis wMel.